Here is a 520-residue protein sequence, read N- to C-terminus: Bifunctional purine biosynthesis protein PurH (520 aa).

An MGS-like domain is found at 1 to 150 (MSDDRKAIKR…KNHPSVAVVV (150 aa)).

This sequence belongs to the PurH family.

It catalyses the reaction (6R)-10-formyltetrahydrofolate + 5-amino-1-(5-phospho-beta-D-ribosyl)imidazole-4-carboxamide = 5-formamido-1-(5-phospho-D-ribosyl)imidazole-4-carboxamide + (6S)-5,6,7,8-tetrahydrofolate. The enzyme catalyses IMP + H2O = 5-formamido-1-(5-phospho-D-ribosyl)imidazole-4-carboxamide. It functions in the pathway purine metabolism; IMP biosynthesis via de novo pathway; 5-formamido-1-(5-phospho-D-ribosyl)imidazole-4-carboxamide from 5-amino-1-(5-phospho-D-ribosyl)imidazole-4-carboxamide (10-formyl THF route): step 1/1. It participates in purine metabolism; IMP biosynthesis via de novo pathway; IMP from 5-formamido-1-(5-phospho-D-ribosyl)imidazole-4-carboxamide: step 1/1. In Corynebacterium glutamicum (strain ATCC 13032 / DSM 20300 / JCM 1318 / BCRC 11384 / CCUG 27702 / LMG 3730 / NBRC 12168 / NCIMB 10025 / NRRL B-2784 / 534), this protein is Bifunctional purine biosynthesis protein PurH.